The primary structure comprises 210 residues: Isomeliandiol synthase ISM1 (210 aa).

5 helical membrane passes run F17–I37, L50–F70, I107–V127, I135–A155, and Y172–W192. The region spanning G46–A188 is the EXPERA domain.

Belongs to the EBP family.

It localises to the membrane. The catalysed reaction is 7,8-epoxymelianol = isomeliandiol. Its pathway is secondary metabolite biosynthesis; terpenoid biosynthesis. In terms of biological role, isomerase involved in the biosynthesis of limonoids and quassinoids triterpene natural products such as ailanthone, chaparrinone, glaucarubinone and amarolide, allelopathic degraded triterpene lactones inhibiting the growth of other plants, and possessing antimalarial, antifeedant, insecticidal, anti-inflammatory and anticancer activities. Catalyzes the conversion of 7,8-epoxymelianol to isomeliandiol via skeletal rearrangements. This is Isomeliandiol synthase ISM1 from Ailanthus altissima (Tree-of-heaven).